The sequence spans 353 residues: Immune-associated nucleotide-binding protein 8 (353 aa).

The segment covering Met1–Ser10 has biased composition (polar residues). The segment at Met1 to Glu43 is disordered. Basic and acidic residues predominate over residues Pro12–Phe34. In terms of domain architecture, AIG1-type G spans His40–Lys248. The interval Gly49–Ser56 is G1. Residues Gly49–Ala57 and Ser70 each bind GTP. The segment at Gly76–Glu80 is G2. Residues Asp98–Gly101 are G3. Positions Thr168–Asp171 are G4. Positions Asp207 to Lys209 are G5. A GTP-binding site is contributed by Asn208. The stretch at Tyr244 to Glu291 forms a coiled coil.

The protein belongs to the TRAFAC class TrmE-Era-EngA-EngB-Septin-like GTPase superfamily. AIG1/Toc34/Toc159-like paraseptin GTPase family. IAN subfamily. In terms of tissue distribution, mainly expressed in leaves.

The polypeptide is Immune-associated nucleotide-binding protein 8 (Arabidopsis thaliana (Mouse-ear cress)).